The following is a 100-amino-acid chain: Urease subunit gamma (100 aa).

The protein belongs to the urease gamma subunit family. In terms of assembly, heterotrimer of UreA (gamma), UreB (beta) and UreC (alpha) subunits. Three heterotrimers associate to form the active enzyme.

Its subcellular location is the cytoplasm. It carries out the reaction urea + 2 H2O + H(+) = hydrogencarbonate + 2 NH4(+). It functions in the pathway nitrogen metabolism; urea degradation; CO(2) and NH(3) from urea (urease route): step 1/1. The polypeptide is Urease subunit gamma (Variovorax paradoxus (strain S110)).